The sequence spans 204 residues: Acyl-homoserine-lactone synthase (204 aa).

This sequence belongs to the autoinducer synthase family.

It carries out the reaction a fatty acyl-[ACP] + S-adenosyl-L-methionine = an N-acyl-L-homoserine lactone + S-methyl-5'-thioadenosine + holo-[ACP] + H(+). Functionally, required for the synthesis of acyl-HSL autoinducers that bind to SolR. This chain is Acyl-homoserine-lactone synthase (solI), found in Ralstonia solanacearum (Pseudomonas solanacearum).